The primary structure comprises 150 residues: uncharacterized protein (150 aa).

Transmembrane regions (helical) follow at residues 50–70 (VVSV…VIHL), 80–100 (LYIT…QLWL), and 127–147 (KVVI…FFIE).

It localises to the membrane. This is an uncharacterized protein from Schizosaccharomyces pombe (strain 972 / ATCC 24843) (Fission yeast).